A 303-amino-acid chain; its full sequence is Recombination-associated protein RdgC (303 aa).

This sequence belongs to the RdgC family.

The protein localises to the cytoplasm. It localises to the nucleoid. May be involved in recombination. The chain is Recombination-associated protein RdgC from Shewanella halifaxensis (strain HAW-EB4).